The sequence spans 247 residues: Putative methyltransferase YqeM (247 aa).

It belongs to the methyltransferase superfamily.

Its function is as follows. May be a S-adenosyl-L-methionine (SAM)-dependent methyltransferase. The sequence is that of Putative methyltransferase YqeM (yqeM) from Bacillus subtilis (strain 168).